We begin with the raw amino-acid sequence, 292 residues long: Rab effector Noc2 (292 aa).

Positions 41–158 constitute a RabBD domain; sequence QRKSQSLSPA…KRSGAWFYKG (118 aa). The FYVE-type zinc-finger motif lies at 89 to 146; it reads GNGLSQCLLCGEVLGFLGSSSVFCKDCRKKVCTKCGIEASPSQKRPLWLCKICSEQRE. Residues cysteine 95, cysteine 98, cysteine 112, cysteine 115, cysteine 120, cysteine 123, cysteine 138, and cysteine 141 each contribute to the Zn(2+) site. Residues 175–292 form a disordered region; that stretch reads PSFRPLPVEP…RTLAGPRGPR (118 aa). Positions 221-235 are enriched in basic and acidic residues; that stretch reads LDDRLRPAGVRDPKG. Position 248 is a phosphoserine (serine 248). Low complexity predominate over residues 257–269; it reads ASCLSGSQSSLAS.

Recruited to dense-core vesicles through specific interaction with RAB27A in endocrine cells. Interacts with RAB3A, RAB3B, RAB3C and RAB3D. Interacts with ZYX.

Its subcellular location is the cytoplasm. It localises to the cytoplasmic vesicle. It is found in the secretory vesicle membrane. Its function is as follows. Rab GTPase effector involved in the late steps of regulated exocytosis, both in endocrine and exocrine cells. This Bos taurus (Bovine) protein is Rab effector Noc2 (RPH3AL).